A 1387-amino-acid chain; its full sequence is DNA-directed RNA polymerase subunit beta' (1387 aa).

The Zn(2+) site is built by cysteine 70, cysteine 72, cysteine 85, and cysteine 88. Positions 461, 463, and 465 each coordinate Mg(2+). Cysteine 808, cysteine 882, cysteine 889, and cysteine 892 together coordinate Zn(2+). A disordered region spans residues 1367 to 1387 (QDEAKGVGQETPRLSGQEAAE).

Belongs to the RNA polymerase beta' chain family. In terms of assembly, the RNAP catalytic core consists of 2 alpha, 1 beta, 1 beta' and 1 omega subunit. When a sigma factor is associated with the core the holoenzyme is formed, which can initiate transcription. The cofactor is Mg(2+). Zn(2+) serves as cofactor.

The catalysed reaction is RNA(n) + a ribonucleoside 5'-triphosphate = RNA(n+1) + diphosphate. Functionally, DNA-dependent RNA polymerase catalyzes the transcription of DNA into RNA using the four ribonucleoside triphosphates as substrates. This chain is DNA-directed RNA polymerase subunit beta', found in Granulibacter bethesdensis (strain ATCC BAA-1260 / CGDNIH1).